The following is a 485-amino-acid chain: MSLFDHSVSELHKKLNNKEISVTDLVEESYKRIADVEDNVKAFLTLDEENARAKAKELDAKIGAEDNGLLFGMPIGVKDNIVTNGLRTTCASKILANFDPIYDATVVQKLKAADTITIGKLNMDEFAMGSSNENSGFYATKNPWNLDYVPGGSSGGSAAAVAAGEVLFSLGSDTGGSIRQPAAYCGVVGLKPTYGRVSRYGLVAFASSLDQIGPITRTVEDNAYLLQAISGLDRMDATSANVEVGNYLAGLTGDVKGLRIAVPKEYLGEGVGEEARESVLAALKVLEGMGATWEEVSLPHSKYALATYYLLSSSEASANLSRFDGVRYGVRSDNVNNLMDLYKNTRSEGFGDEVKRRIMLGTFALSSGYYDAYYKKAQQVRTLIKNDFENVFANYDVIIGPTTPTPAFKVGEKVDDPMTMYANDILTIPVNLAGVPAISVPCGFGANNMPLGLQIIGKHFDEATIYRVAHAFEQATDYHTKKASL.

Catalysis depends on charge relay system residues lysine 78 and serine 153. The active-site Acyl-ester intermediate is the serine 177.

This sequence belongs to the amidase family. GatA subfamily. In terms of assembly, heterotrimer of A, B and C subunits.

It carries out the reaction L-glutamyl-tRNA(Gln) + L-glutamine + ATP + H2O = L-glutaminyl-tRNA(Gln) + L-glutamate + ADP + phosphate + H(+). Its function is as follows. Allows the formation of correctly charged Gln-tRNA(Gln) through the transamidation of misacylated Glu-tRNA(Gln) in organisms which lack glutaminyl-tRNA synthetase. The reaction takes place in the presence of glutamine and ATP through an activated gamma-phospho-Glu-tRNA(Gln). The sequence is that of Glutamyl-tRNA(Gln) amidotransferase subunit A from Bacillus cereus (strain AH820).